The chain runs to 398 residues: WW domain-binding protein 4 (398 aa).

The Matrin-type zinc-finger motif lies at 11–42 (KFCDYCKCWIADNRPSIDFHERGKNHKENVAK). Disordered stretches follow at residues 84–182 (GIKP…SVWV), 200–274 (VSTW…KLSP), 300–350 (LASK…PPVL), and 379–398 (KKRE…LDDQ). A compositionally biased stretch (polar residues) spans 92–103 (PSSTLNKTQSIT). Basic residues predominate over residues 112 to 125 (KKEKKEKKEKKKKT). Over residues 126–139 (REGTSESPKTEPKE) the composition is skewed to basic and acidic residues. WW domains are found at residues 134–167 (KTEP…KPKG) and 175–208 (SHTG…KPDG). Positions 169 to 178 (QGNSKTSHTG) are enriched in polar residues. The segment covering 221–232 (KHSEEADSRASE) has biased composition (basic and acidic residues). A compositionally biased stretch (acidic residues) spans 233–242 (SDSEQEDSES). Over residues 305 to 316 (ASSDESKTDTYG) the composition is skewed to basic and acidic residues. A compositionally biased stretch (acidic residues) spans 324–333 (EEEEEPDEKV).

As to quaternary structure, component of the spliceosome B complex. Associated with U2 snRNPs. Binds splicing factors SNRPB, SNRPC and SF1.

The protein localises to the nucleus. Its subcellular location is the nucleus speckle. Its function is as follows. Involved in pre-mRNA splicing as a component of the spliceosome. May play a role in cross-intron bridging of U1 and U2 snRNPs in the mammalian A complex. The sequence is that of WW domain-binding protein 4 (WBP4) from Gallus gallus (Chicken).